The sequence spans 931 residues: Mitochondrial cox1 translation regulator ppr4 (931 aa).

The N-terminal 16 residues, 1-16 (MSKSFAYRHIWCFWRF), are a transit peptide targeting the mitochondrion. 7 PPR repeats span residues 247–277 (NEVL…MYRT), 282–316 (SFTA…RPKI), 429–461 (HLLN…KIKV), 462–496 (DERT…GIKT), 497–531 (SNQA…GITE), 598–632 (NVVH…GKAP), and 683–713 (PPSL…YLEY).

As to quaternary structure, component of the MRH5C complex, composed of mrh5, ppr4, mtf2, and sls1. Proteins mtf2 and sls1 form a subcomplex that serves as a scaffold to bring mrh5 and ppr4 together. The MRH5C complex associates with the small subunit of the mitochondrial ribosome.

It is found in the mitochondrion. In terms of biological role, RNA-binding translation activation factor that as part of the MRH5C complex specifically recruits cox1 mRNA to the mitochondrial ribosome for translation initiation. This is Mitochondrial cox1 translation regulator ppr4 from Schizosaccharomyces pombe (strain 972 / ATCC 24843) (Fission yeast).